The chain runs to 206 residues: MSIKKQGLLIVISGPSGAGKGTICKALIEKEKDLKLSISATTRQPRAGEVDGKNYFFKSEEEFKRMIEEDAFLEWAKVYDHYYGTPKEFVLKNLEEGNDVVLEIDIQGALKVKEKFPEGVFIFILPPSMEELRNRIKKRGTESEEEIIKRFKSAYEELNYVSKYNYVVINDDVDRAVEKIRAIIIAEKCRVDRNKDLYLKIREESV.

The Guanylate kinase-like domain occupies 7–185 (GLLIVISGPS…AVEKIRAIII (179 aa)). 14–21 (GPSGAGKG) is an ATP binding site.

It belongs to the guanylate kinase family.

It is found in the cytoplasm. It catalyses the reaction GMP + ATP = GDP + ADP. Its function is as follows. Essential for recycling GMP and indirectly, cGMP. This chain is Guanylate kinase, found in Caldanaerobacter subterraneus subsp. tengcongensis (strain DSM 15242 / JCM 11007 / NBRC 100824 / MB4) (Thermoanaerobacter tengcongensis).